Consider the following 130-residue polypeptide: MVLLDPLADALSIIKNAEAVGKDSCTIRPASKLIGNVLKVMNDRGYIGDFEFVEDGKAGVYTVELIGRINKCGAIKPRYSVGVTEFERWEKQFLPAKNFGVLILTTPKGVISQYEARENNVGGQLLSFVY.

Belongs to the universal ribosomal protein uS8 family. In terms of assembly, part of the 30S ribosomal subunit.

Its function is as follows. One of the primary rRNA binding proteins, it binds directly to 16S rRNA central domain where it helps coordinate assembly of the platform of the 30S subunit. This Methanococcoides burtonii (strain DSM 6242 / NBRC 107633 / OCM 468 / ACE-M) protein is Small ribosomal subunit protein uS8.